Consider the following 291-residue polypeptide: B-lymphocyte antigen CD20 (291 aa).

The Cytoplasmic portion of the chain corresponds to 1 to 44 (MSGPFPAEPTKGPLAMQPAPKVNLKRTSSLVGPTQSFFMRESKA). The residue at position 29 (Ser29) is a Phosphoserine. The chain crosses the membrane as a helical span at residues 45-65 (LGAVQIMNGLFHITLGGLLMI). Residues 66–68 (PTG) are Extracellular-facing. The helical transmembrane segment at 69 to 89 (VFAPICLSVWYPLWGGIMYII) threads the bilayer. Topologically, residues 90-111 (SGSLLAAAAEKTSRKSLVKAKV) are cytoplasmic. Residues 112–132 (IMSSLSLFAAISGIILSIMDI) traverse the membrane as a helical segment. Over 133–182 (LNMTLSHFLKMRRLELIQTSKPYVDIYDCEPSNSSEKNSPSTQYCNSIQS) the chain is Extracellular. The helical transmembrane segment at 183–203 (VFLGILSAMLISAFFQKLVTA) threads the bilayer. Residues 204-291 (GIVENEWKRM…SLPVENEIAP (88 aa)) lie on the Cytoplasmic side of the membrane. A lipid anchor (S-palmitoyl cysteine) is attached at Cys214. Ser219 is modified (phosphoserine). Residue Thr233 is modified to Phosphothreonine. Positions 261–270 (VQEEEEEEAE) are enriched in acidic residues. A disordered region spans residues 261–291 (VQEEEEEEAEINFPAPPQEQESLPVENEIAP).

This sequence belongs to the MS4A family. As to quaternary structure, forms homotetramers. Interacts with the heavy and light chains of cell surface IgM, the antigen-binding components of the BCR. Phosphorylated.

Its subcellular location is the cell membrane. Its function is as follows. B-lymphocyte-specific membrane protein that plays a role in the regulation of cellular calcium influx necessary for the development, differentiation, and activation of B-lymphocytes. Functions as a store-operated calcium (SOC) channel component promoting calcium influx after activation by the B-cell receptor/BCR. The protein is B-lymphocyte antigen CD20 (Ms4a1) of Mus musculus (Mouse).